We begin with the raw amino-acid sequence, 467 residues long: Zinc finger protein ZIC 3 (467 aa).

Residues 66-107 are disordered; that stretch reads LSSGQSSAFTPQGSGYANALGHHHHHHHHHHHTSQVPSYGGA. A compositionally biased stretch (polar residues) spans 67 to 80; it reads SSGQSSAFTPQGSG. Over residues 86–98 the composition is skewed to basic residues; it reads GHHHHHHHHHHHT. A Glycyl lysine isopeptide (Lys-Gly) (interchain with G-Cter in SUMO2) cross-link involves residue lysine 248. A C2H2-type 1; atypical zinc finger spans residues 251–286; the sequence is LSCKWIDEAQLSRPKKSCDRTFSTMHELVTHVTMEH. Residues 295-322 form a C2H2-type 2; atypical zinc finger; the sequence is HVCYWEECPREGKSFKAKYKLVNHIRVH. 2 short sequence motifs (nuclear localization signal) span residues 297-322 and 330-352; these read CYWEECPREGKSFKAKYKLVNHIRVH and CPFPGCGKIFARSENLKIHKRTH. 3 C2H2-type zinc fingers span residues 328–352, 358–382, and 388–410; these read FPCPFPGCGKIFARSENLKIHKRTH, FKCEFEGCDRRFANSSDRKKHMHVH, and YICKVCDKSYTHPSSLRKHMKVH. Residues 404-467 are disordered; that stretch reads RKHMKVHESQ…LPPNFNEWYV (64 aa). The span at 412–428 shows a compositional bias: low complexity; sequence SQGSDSSPAASSGYESS. A compositionally biased stretch (polar residues) spans 435 to 455; it reads SANSKDTTKTPSAVQTSTSHN.

It belongs to the GLI C2H2-type zinc-finger protein family. Interacts (via the C2H2-type domains 3, 4 and 5) with MDFIC (via the C2H2-type domains 3, 4 and 5); the interaction reduces its transcriptional activity. Interacts with KPNA1 and KPNA6. Interacts (via C2H2-type domains 3, 4 and 5) with GLI3; the interaction enhances its transcriptional activity.

It is found in the nucleus. It localises to the cytoplasm. Its function is as follows. Acts as a transcriptional activator. Required in the earliest stages in both axial midline development and left-right (LR) asymmetry specification. Binds to the minimal GLI-consensus sequence 5'-GGGTGGTC-3'. The chain is Zinc finger protein ZIC 3 (ZIC3) from Homo sapiens (Human).